A 474-amino-acid polypeptide reads, in one-letter code: MFS transporter SAT21 (474 aa).

6 helical membrane passes run 7-27, 64-84, 101-121, 131-151, 162-182, and 189-209; these read LVLP…LEVP, LVVG…ILYF, CVGY…HQVF, LFLF…AFVA, FLFL…ALAT, and LFLP…LLQM. The segment at 220–252 is disordered; it reads KVVGSTSDQTEPFLRSSSNSSQESGTAAPAIDP. The segment covering 222–244 has biased composition (polar residues); sequence VGSTSDQTEPFLRSSSNSSQESG. N-linked (GlcNAc...) asparagine glycosylation is present at Asn-238. The next 6 membrane-spanning stretches (helical) occupy residues 276 to 296, 315 to 335, 346 to 366, 374 to 394, 406 to 426, and 445 to 465; these read FICY…AFIF, LALS…ANAT, INIG…IMAW, FIFS…LQGV, SIFA…GPLM, and FLAS…LWAL.

It belongs to the major facilitator superfamily.

It localises to the cell membrane. MFS transporter; part of the satratoxin SC3 cluster involved in the biosynthesis of satratoxins, trichothecene mycotoxins that are associated with human food poisonings. Satratoxins are suggested to be made by products of multiple gene clusters (SC1, SC2 and SC3) that encode 21 proteins in all, including polyketide synthases, acetyltransferases, and other enzymes expected to modify the trichothecene skeleton. SC1 encodes 10 proteins, SAT1 to SAT10. The largest are SAT8, which encodes a putative polyketide synthase (PKS) with a conventional non-reducing architecture, and SAT10, a putative protein containing four ankyrin repeats and thus may be involved in protein scaffolding. The putative short-chain reductase SAT3 may assist the PKS in some capacity. SAT6 contains a secretory lipase domain and acts probably as a trichothecene esterase. SAT5 encodes a putative acetyltransferase, and so, with SAT6, may affect endogenous protection from toxicity. The probable transcription factor SAT9 may regulate the expression of the SC1 cluster. SC2 encodes proteins SAT11 to SAT16, the largest of which encodes the putative reducing PKS SAT13. SAT11 is a cytochrome P450 monooxygenase, while SAT14 and SAT16 are probable acetyltransferases. The SC2 cluster may be regulated by the transcription factor SAT15. SC3 is a small cluster that encodes 5 proteins, SAT17 to SAT21. SAT21 is a putative MFS-type transporter which may have a role in exporting secondary metabolites. The four other proteins putatively encoded in SC3 include the taurine hydroxylase-like protein SAT17, the O-methyltransferase SAT18, the acetyltransferase SAT19, and the Cys6-type zinc finger SAT20, the latter being probably involved in regulation of SC3 expression. The chain is MFS transporter SAT21 from Stachybotrys chartarum (strain CBS 109288 / IBT 7711) (Toxic black mold).